A 398-amino-acid chain; its full sequence is Fatty-acid-binding protein 2 (398 aa).

Residues Arg222, Tyr235, and Ser302 each contribute to the dodecanoate site.

The protein belongs to the chalcone isomerase family. As to expression, expressed in developing cotyledons, young seedlings, roots, seeds, embryos, macrospores, preanthesis and tapetum. Restricted to developing and reproductive tissues.

The protein resides in the plastid. Its subcellular location is the chloroplast stroma. Its function is as follows. Fatty-acid-binding protein. Associates with saturated fatty acid. This is Fatty-acid-binding protein 2 (FAP2) from Arabidopsis thaliana (Mouse-ear cress).